A 283-amino-acid chain; its full sequence is Pre-mRNA-splicing factor CWC23 (283 aa).

The 73-residue stretch at 15–87 (NLYDVLELPT…DVRPHYDRWL (73 aa)) folds into the J domain.

The protein belongs to the DnaJ family. As to quaternary structure, belongs to the CWC complex (or CEF1-associated complex), a spliceosome sub-complex reminiscent of a late-stage spliceosome composed of the U2, U5 and U6 snRNAs and at least BUD13, BUD31, BRR2, CDC40, CEF1, CLF1, CUS1, CWC2, CWC15, CWC21, CWC22, CWC23, CWC24, CWC25, CWC27, ECM2, HSH155, IST3, ISY1, LEA1, MSL1, NTC20, PRP8, PRP9, PRP11, PRP19, PRP21, PRP22, PRP45, PRP46, SLU7, SMB1, SMD1, SMD2, SMD3, SMX2, SMX3, SNT309, SNU114, SPP2, SYF1, SYF2, RSE1 and YJU2.

It localises to the cytoplasm. The protein localises to the nucleus. Its function is as follows. Involved in pre-mRNA splicing. May be involved in endoplasmic reticulum-associated protein degradation (ERAD) and required for growth at low and high temperatures. In Saccharomyces cerevisiae (strain ATCC 204508 / S288c) (Baker's yeast), this protein is Pre-mRNA-splicing factor CWC23 (CWC23).